The primary structure comprises 142 residues: UPF0332 protein PH1297 (142 aa).

The protein belongs to the UPF0332 family.

This chain is UPF0332 protein PH1297, found in Pyrococcus horikoshii (strain ATCC 700860 / DSM 12428 / JCM 9974 / NBRC 100139 / OT-3).